The primary structure comprises 163 residues: Large ribosomal subunit protein uL11 (163 aa).

A disordered region spans residues 1 to 26; the sequence is MAETIEVLVAGGQADPGPPLGPELGP.

It belongs to the universal ribosomal protein uL11 family. Part of the ribosomal stalk of the 50S ribosomal subunit. Interacts with L10 and the large rRNA to form the base of the stalk. L10 forms an elongated spine to which L12 dimers bind in a sequential fashion forming a multimeric L10(L12)X complex.

Its function is as follows. Forms part of the ribosomal stalk which helps the ribosome interact with GTP-bound translation factors. The protein is Large ribosomal subunit protein uL11 of Halobacterium salinarum (strain ATCC 29341 / DSM 671 / R1).